The primary structure comprises 141 residues: D-aminoacyl-tRNA deacylase (141 aa).

The Gly-cisPro motif, important for rejection of L-amino acids motif lies at 133 to 134 (GP).

Belongs to the DTD family. Homodimer.

The protein resides in the cytoplasm. The enzyme catalyses glycyl-tRNA(Ala) + H2O = tRNA(Ala) + glycine + H(+). It carries out the reaction a D-aminoacyl-tRNA + H2O = a tRNA + a D-alpha-amino acid + H(+). Functionally, an aminoacyl-tRNA editing enzyme that deacylates mischarged D-aminoacyl-tRNAs. Also deacylates mischarged glycyl-tRNA(Ala), protecting cells against glycine mischarging by AlaRS. Acts via tRNA-based rather than protein-based catalysis; rejects L-amino acids rather than detecting D-amino acids in the active site. By recycling D-aminoacyl-tRNA to D-amino acids and free tRNA molecules, this enzyme counteracts the toxicity associated with the formation of D-aminoacyl-tRNA entities in vivo and helps enforce protein L-homochirality. The sequence is that of D-aminoacyl-tRNA deacylase from Kineococcus radiotolerans (strain ATCC BAA-149 / DSM 14245 / SRS30216).